Consider the following 533-residue polypeptide: E3 ubiquitin-protein ligase MGRN1 (533 aa).

G2 is lipidated: N-myristoyl glycine. The RING-type zinc finger occupies 278 to 317; it reads ECVVCLSDLRDTLILPCRHLCLCTSCADTLRYQANNCPIC. The Required for TSG101-binding motif lies at 385 to 388; sequence PSAP. Y390 carries the phosphotyrosine modification. Positions 421–519 are disordered; that stretch reads QKGKTQSKSP…QPVPPADIYL (99 aa). Residues 423-439 show a composition bias toward polar residues; that stretch reads GKTQSKSPDSTLRSPSS. Residues S429, S450, and S502 each carry the phosphoserine modification. A compositionally biased stretch (acidic residues) spans 443-454; the sequence is EEDEEKLSEDPE.

In terms of assembly, interacts with MC1R and MC4R. Interacts with TSG101. Interacts with mislocalized cytosolically exposed PRNP; this interaction alters MGRN1 subcellular location and causes lysosomal enlargement. Autoubiquitinated in vitro.

It is found in the cytoplasm. The protein localises to the cytosol. Its subcellular location is the cell membrane. It localises to the early endosome. The enzyme catalyses S-ubiquitinyl-[E2 ubiquitin-conjugating enzyme]-L-cysteine + [acceptor protein]-L-lysine = [E2 ubiquitin-conjugating enzyme]-L-cysteine + N(6)-ubiquitinyl-[acceptor protein]-L-lysine.. It functions in the pathway protein modification; protein ubiquitination. E3 ubiquitin-protein ligase. Mediates TSG101 monoubiquitination at multiple sites. Plays a role in the regulation of endosome-to-lysosome trafficking. Impairs MC1R- and MC4R-signaling by competing with GNAS-binding to MCRs and inhibiting agonist-induced cAMP production. Does not inhibit ADRB2-signaling. Does not promote MC1R ubiquitination. Also acts as a negative regulator of hedgehog signaling. This is E3 ubiquitin-protein ligase MGRN1 (Mgrn1) from Rattus norvegicus (Rat).